Here is a 328-residue protein sequence, read N- to C-terminus: Ferredoxin--NADP reductase (328 aa).

6 residues coordinate FAD: Ser14, Glu33, Gln41, Tyr46, Ile90, and Phe126.

It belongs to the ferredoxin--NADP reductase type 2 family. As to quaternary structure, homodimer. FAD is required as a cofactor.

It carries out the reaction 2 reduced [2Fe-2S]-[ferredoxin] + NADP(+) + H(+) = 2 oxidized [2Fe-2S]-[ferredoxin] + NADPH. This is Ferredoxin--NADP reductase from Mycoplasmoides gallisepticum (strain R(low / passage 15 / clone 2)) (Mycoplasma gallisepticum).